A 457-amino-acid polypeptide reads, in one-letter code: MSAENGSPGLPNGGVCCATDSGRCSLVGNKVTVVLGAQWGDEGKGKVVDLLAQDADIVCRCQGGNNAGHTVVVDSVEYDFHLLPSGIINQNAIAFIGNGVVIHLPGLFEEAEKNLKKGQGLVGWEKRLCISDRAHIVFDFHQAADGIQEQQRQEQAGKNLGTTKKGIGPVYSSKAARSGLRMCDLVSDFSEFSQRFKLLAKQYKSMYPSLEIDIDGELKKLQDYADRVKPMVKDGVYYLYEALHGPPKNILVEGANAALLDIDFGTYPFVTSSNCTVGGVCTGLGIPPQSVGDVYGVVKAYTTRVGIGAFPTEQNNDTGEMLQTRGHEYGVTTGRKRRCGWLDLVLLRYAHMINGFTALALTKLDILDVLSEIKVGVSYKIDGKKIPHFPANQEVLNRVEVEYETLPGWNTDTCNVRTFEELPENAKKYVRYIELELGIPIKWIGVGKSRESMIQLF.

GTP is bound by residues 40–46 (GDEGKGK) and 68–70 (GHT). Aspartate 41 functions as the Proton acceptor in the catalytic mechanism. Positions 41 and 68 each coordinate Mg(2+). Aspartate 41 contributes to the substrate binding site. Residues 41–44 (DEGK), 66–69 (NAGH), threonine 163, arginine 177, asparagine 256, threonine 271, and arginine 335 each bind IMP. The active-site Proton donor is histidine 69. 331–337 (VTTGRKR) is a binding site for substrate. Residues arginine 337, 363–365 (KLD), and 445–448 (GVGK) contribute to the GTP site.

The protein belongs to the adenylosuccinate synthetase family. As to quaternary structure, homodimer. Mg(2+) serves as cofactor.

Its subcellular location is the cytoplasm. It is found in the mitochondrion. The catalysed reaction is IMP + L-aspartate + GTP = N(6)-(1,2-dicarboxyethyl)-AMP + GDP + phosphate + 2 H(+). The protein operates within purine metabolism; AMP biosynthesis via de novo pathway; AMP from IMP: step 1/2. Its activity is regulated as follows. Inhibited competitively by AMP and IMP and non-competitively by fructose 1,6-bisphosphate. Its function is as follows. Plays an important role in the de novo pathway and in the salvage pathway of purine nucleotide biosynthesis. Catalyzes the first committed step in the biosynthesis of AMP from IMP. This Xenopus tropicalis (Western clawed frog) protein is Adenylosuccinate synthetase isozyme 2 A (adss2-a).